A 175-amino-acid polypeptide reads, in one-letter code: NADH-quinone oxidoreductase subunit I (175 aa).

2 consecutive 4Fe-4S ferredoxin-type domains span residues 69–98 and 115–144; these read KRDEQGRERCTSCFCCMWICPADAIYIEAA and KKFEIDLLRCIFCGMCEEACPKGAIYLDGP. The [4Fe-4S] cluster site is built by Cys-78, Cys-81, Cys-84, Cys-88, Cys-124, Cys-127, Cys-130, and Cys-134.

The protein belongs to the complex I 23 kDa subunit family. As to quaternary structure, NDH-1 is composed of 14 different subunits. Subunits NuoA, H, J, K, L, M, N constitute the membrane sector of the complex. Requires [4Fe-4S] cluster as cofactor.

Its subcellular location is the cell inner membrane. The catalysed reaction is a quinone + NADH + 5 H(+)(in) = a quinol + NAD(+) + 4 H(+)(out). Its function is as follows. NDH-1 shuttles electrons from NADH, via FMN and iron-sulfur (Fe-S) centers, to quinones in the respiratory chain. The immediate electron acceptor for the enzyme in this species is believed to be ubiquinone. Couples the redox reaction to proton translocation (for every two electrons transferred, four hydrogen ions are translocated across the cytoplasmic membrane), and thus conserves the redox energy in a proton gradient. This is NADH-quinone oxidoreductase subunit I from Leptospira interrogans serogroup Icterohaemorrhagiae serovar Lai (strain 56601).